The sequence spans 233 residues: Uracil-DNA glycosylase (233 aa).

D70 serves as the catalytic Proton acceptor.

It belongs to the uracil-DNA glycosylase (UDG) superfamily. UNG family.

Its subcellular location is the cytoplasm. It catalyses the reaction Hydrolyzes single-stranded DNA or mismatched double-stranded DNA and polynucleotides, releasing free uracil.. Excises uracil residues from the DNA which can arise as a result of misincorporation of dUMP residues by DNA polymerase or due to deamination of cytosine. This Helicobacter acinonychis (strain Sheeba) protein is Uracil-DNA glycosylase.